We begin with the raw amino-acid sequence, 675 residues long: UvrABC system protein B (675 aa).

Residues 32-417 enclose the Helicase ATP-binding domain; the sequence is EGLSDGLAYQ…EHAGQVVEQV (386 aa). Residue 45 to 52 coordinates ATP; it reads GVTGSGKT. Positions 98-121 match the Beta-hairpin motif; the sequence is YYDYYQPEAYVPSRDLFIEKDSAI. Positions 436–602 constitute a Helicase C-terminal domain; it reads QVDDLMSEIN…QIKKQVKDII (167 aa). The UVR domain occupies 634–669; the sequence is IKEIAKLEKAMQQAARDLQFEEAAVLRDRIRNIKEN.

Belongs to the UvrB family. As to quaternary structure, forms a heterotetramer with UvrA during the search for lesions. Interacts with UvrC in an incision complex.

It is found in the cytoplasm. Functionally, the UvrABC repair system catalyzes the recognition and processing of DNA lesions. A damage recognition complex composed of 2 UvrA and 2 UvrB subunits scans DNA for abnormalities. Upon binding of the UvrA(2)B(2) complex to a putative damaged site, the DNA wraps around one UvrB monomer. DNA wrap is dependent on ATP binding by UvrB and probably causes local melting of the DNA helix, facilitating insertion of UvrB beta-hairpin between the DNA strands. Then UvrB probes one DNA strand for the presence of a lesion. If a lesion is found the UvrA subunits dissociate and the UvrB-DNA preincision complex is formed. This complex is subsequently bound by UvrC and the second UvrB is released. If no lesion is found, the DNA wraps around the other UvrB subunit that will check the other stand for damage. In Neisseria gonorrhoeae, this protein is UvrABC system protein B.